The following is a 609-amino-acid chain: MHPRYSPAPPPLHQQQQQQPPQQQQQQMGGPHQQQSGGVGPGTGHGGVGAAVGASNAGHMRAPPNSQQLPPPMPRSQNYANGSSSAASVAAAPPTPRSAFPGAPLTASAVALKGAIPQRPPAMTSPAAAAAGAALAAGAPYRGATSWTPQGYAPAAAAAAAAVAQQAYRYTAPLPQPAYAAYTPHTATTPATTTYGQRVPTAASPSNTNSSSSSNTGSQSGTLSTSLSNTTNTNTTMGPNGTAQNQNQQGGEQLSKTNLYIRGLQQGTTDKDLINMCAQYGTIISTKAILDKTTNKCKGYGFVDFEQPAYAEGAVKGLQAKGVQAQMAKQQEQDPTNLYIANLPPHFKETDLEAMLAKYGQVVSTRILRDQQMNSKGVGFARMESREKCEQIIQMFNGNTIPGAKDPLLVKFADGGPKKKNLFKTPDPSARAWRDVSAEGIPVAYDPSMQQNGVSVNVGTPIGVPYSRFGAPQVGGYPVAGSQWIPGYMMTQPITQVDDQYSSSALQYMQMAAAPQLGVTSYKPEAVNQVQPRGISMMVSGDTAVPYGTMMPQLATLQIGNSYISPTYPYYAPPPTIIPTMPMTDSEQASTAASPDEAYTQYPHQAAPK.

The span at 1–12 shows a compositional bias: pro residues; the sequence is MHPRYSPAPPPL. A disordered region spans residues 1 to 96; that stretch reads MHPRYSPAPP…ASVAAAPPTP (96 aa). Y5 bears the Phosphotyrosine mark. A compositionally biased stretch (low complexity) spans 13–35; the sequence is HQQQQQQPPQQQQQQMGGPHQQQ. The span at 37-50 shows a compositional bias: gly residues; the sequence is GGVGPGTGHGGVGA. Composition is skewed to low complexity over residues 51–68 and 83–92; these read AVGA…NSQQ and SSSAASVAAA. Y152 and Y168 each carry phosphotyrosine. Positions 190–252 are disordered; sequence PATTTYGQRV…AQNQNQQGGE (63 aa). A compositionally biased stretch (low complexity) spans 204-252; sequence SPSNTNSSSSSNTGSQSGTLSTSLSNTTNTNTTMGPNGTAQNQNQQGGE. 2 RRM domains span residues 257–330 and 336–415; these read TNLY…MAKQ and TNLY…FADG. Residues 583–609 are disordered; sequence MTDSEQASTAASPDEAYTQYPHQAAPK.

Has a role in the perception of gravity. This is Protein alan shepard from Drosophila grimshawi (Hawaiian fruit fly).